We begin with the raw amino-acid sequence, 423 residues long: Serine--tRNA ligase 2 (423 aa).

231–233 contributes to the L-serine binding site; it reads TAE. An ATP-binding site is contributed by 262-264; it reads RSE. E285 contacts L-serine. 349–352 contacts ATP; the sequence is EISS. S384 is a binding site for L-serine.

It belongs to the class-II aminoacyl-tRNA synthetase family. Type-1 seryl-tRNA synthetase subfamily. In terms of assembly, homodimer. The tRNA molecule binds across the dimer.

Its subcellular location is the cytoplasm. It catalyses the reaction tRNA(Ser) + L-serine + ATP = L-seryl-tRNA(Ser) + AMP + diphosphate + H(+). It carries out the reaction tRNA(Sec) + L-serine + ATP = L-seryl-tRNA(Sec) + AMP + diphosphate + H(+). It functions in the pathway aminoacyl-tRNA biosynthesis; selenocysteinyl-tRNA(Sec) biosynthesis; L-seryl-tRNA(Sec) from L-serine and tRNA(Sec): step 1/1. In terms of biological role, catalyzes the attachment of serine to tRNA(Ser). Is also able to aminoacylate tRNA(Sec) with serine, to form the misacylated tRNA L-seryl-tRNA(Sec), which will be further converted into selenocysteinyl-tRNA(Sec). The polypeptide is Serine--tRNA ligase 2 (Enterococcus faecalis (strain ATCC 700802 / V583)).